Reading from the N-terminus, the 283-residue chain is Elongation factor Ts (283 aa).

An involved in Mg(2+) ion dislocation from EF-Tu region spans residues 80-83; the sequence is TDFV.

Belongs to the EF-Ts family.

The protein localises to the cytoplasm. In terms of biological role, associates with the EF-Tu.GDP complex and induces the exchange of GDP to GTP. It remains bound to the aminoacyl-tRNA.EF-Tu.GTP complex up to the GTP hydrolysis stage on the ribosome. This is Elongation factor Ts from Pectobacterium carotovorum subsp. carotovorum (strain PC1).